The sequence spans 66 residues: Photosystem II reaction center protein J (66 aa).

The chain crosses the membrane as a helical span at residues 37–57; that stretch reads LWLVATAGGMAVIFVVGLFFY.

Belongs to the PsbJ family. PSII is composed of 1 copy each of membrane proteins PsbA, PsbB, PsbC, PsbD, PsbE, PsbF, PsbH, PsbI, PsbJ, PsbK, PsbL, PsbM, PsbT, PsbX, PsbY, PsbZ, Psb30/Ycf12, peripheral proteins PsbO, CyanoQ (PsbQ), PsbU, PsbV and a large number of cofactors. It forms dimeric complexes.

Its subcellular location is the cellular thylakoid membrane. Its function is as follows. One of the components of the core complex of photosystem II (PSII). PSII is a light-driven water:plastoquinone oxidoreductase that uses light energy to abstract electrons from H(2)O, generating O(2) and a proton gradient subsequently used for ATP formation. It consists of a core antenna complex that captures photons, and an electron transfer chain that converts photonic excitation into a charge separation. The sequence is that of Photosystem II reaction center protein J from Synechococcus sp. (strain CC9311).